The chain runs to 302 residues: Protoheme IX farnesyltransferase 1 (302 aa).

The next 9 membrane-spanning stretches (helical) occupy residues V30 to V50, L52 to F72, A102 to N122, L124 to L144, I152 to G172, A178 to I198, C224 to M244, C245 to W265, and F282 to V302.

It belongs to the UbiA prenyltransferase family. Protoheme IX farnesyltransferase subfamily.

It is found in the cell inner membrane. The catalysed reaction is heme b + (2E,6E)-farnesyl diphosphate + H2O = Fe(II)-heme o + diphosphate. The protein operates within porphyrin-containing compound metabolism; heme O biosynthesis; heme O from protoheme: step 1/1. In terms of biological role, converts heme B (protoheme IX) to heme O by substitution of the vinyl group on carbon 2 of heme B porphyrin ring with a hydroxyethyl farnesyl side group. This is Protoheme IX farnesyltransferase 1 from Shewanella woodyi (strain ATCC 51908 / MS32).